We begin with the raw amino-acid sequence, 106 residues long: Stress-responsive protein 1 (106 aa).

It is found in the mitochondrion. Its function is as follows. Stress-responsive protein that may play a role in regulation of cell cycle. This is Stress-responsive protein 1 (sro1) from Schizosaccharomyces pombe (strain 972 / ATCC 24843) (Fission yeast).